Here is a 359-residue protein sequence, read N- to C-terminus: Membrane-bound lytic murein transglycosylase C (359 aa).

A signal peptide spans 1–16 (MKKVLALALIAPLLIS). A lipid anchor (N-palmitoyl cysteine) is attached at Cys-17. The S-diacylglycerol cysteine moiety is linked to residue Cys-17.

It belongs to the transglycosylase Slt family.

It localises to the cell outer membrane. It catalyses the reaction Exolytic cleavage of the (1-&gt;4)-beta-glycosidic linkage between N-acetylmuramic acid (MurNAc) and N-acetylglucosamine (GlcNAc) residues in peptidoglycan, from either the reducing or the non-reducing ends of the peptidoglycan chains, with concomitant formation of a 1,6-anhydrobond in the MurNAc residue.. Functionally, murein-degrading enzyme. May play a role in recycling of muropeptides during cell elongation and/or cell division. This chain is Membrane-bound lytic murein transglycosylase C, found in Edwardsiella ictaluri (strain 93-146).